We begin with the raw amino-acid sequence, 122 residues long: MPAARQQRGAAVEAAARAQLEQAGLRLVAGNANYRGGELDLVMRDGPMLVFVEVRYRRDARFGGGAASVDFRKRRKLVLAAQLFLAAHPALAALPCRFDVVEASGEPPLLHWIRDAFRLDDC.

The protein belongs to the UPF0102 family.

The chain is UPF0102 protein xcc-b100_3645 from Xanthomonas campestris pv. campestris (strain B100).